A 78-amino-acid polypeptide reads, in one-letter code: Teretoxin Tsu6.15 (78 aa).

The N-terminal stretch at 1-21 (MATSGRLLCFCLVLGLVFESL) is a signal peptide. Residues 22 to 47 (GYSEARPPRDRKRTVTAKRYDPLAQR) constitute a propeptide that is removed on maturation.

Belongs to the teretoxin M (TM) superfamily. Contains 3 disulfide bonds. In terms of tissue distribution, expressed by the venom duct.

Its subcellular location is the secreted. This is Teretoxin Tsu6.15 from Terebra subulata (Chocolate spotted auger).